The primary structure comprises 507 residues: RNA-binding protein Nova-1 (507 aa).

The segment at 1 to 44 (MMAAAPIQQNGTHTGVPIDLDPPDSRKRPLEAPPEAGSTKRTNT) is disordered. Positions 27 to 43 (KRPLEAPPEAGSTKRTN) match the Bipartite nuclear localization signal motif. Positions 49 to 116 (QYFLKVLIPS…EALNAVHGFI (68 aa)) constitute a KH 1 domain. The tract at residues 139 to 171 (QTTVNPDRIKQTLPSSPTTTKSSPSDPMTTSRA) is disordered. Residues 150–169 (TLPSSPTTTKSSPSDPMTTS) show a composition bias toward low complexity. S154 bears the Phosphoserine mark. 2 consecutive KH domains span residues 171–237 (ANQV…VELI) and 421–488 (KDVV…QYLI). Positions 419-503 (GSKDVVEIAV…YEQGVRAANP (85 aa)) are required for RNA binding.

Interacts with PTBP2; the interaction is direct. As to expression, expressed in neurons of the cortex, sub-cortex, cerebellum and brainstem (at protein level). Expressed in motor neurons, but not in glia.

It is found in the nucleus. Functions to regulate alternative splicing in neurons by binding pre-mRNA in a sequence-specific manner to activate exon inclusion or exclusion. It binds specifically to the sequences 5'-YCAY-3' and regulates splicing in only a subset of regulated exons. Binding to an exonic 5'-YCAY-3' cluster changes the protein complexes assembled on pre-mRNA, blocking U1 snRNP binding and exon inclusion, whereas binding to an intronic 5'-YCAY-3' cluster enhances spliceosome assembly and exon inclusion. Binding to 5'-YCAY-3' clusters results in a local and asymmetric action to regulate spliceosome assembly and alternative splicing in neurons. Binding to an exonic 5'-YCAY-3' cluster changed the protein complexes assembled on pre-mRNA, blocking U1 snRNP (small nuclear ribonucleoprotein) binding and exon inclusion, whereas binding to an intronic 5'-YCAY-3' cluster enhanced spliceosome assembly and exon inclusion. With NOVA1, they perform unique biological functions in different brain areas and cell types. Autoregulates its own expression by acting as a splicing repressor. Acts to activate the inclusion of exon E3A in the glycine receptor alpha-2 chain and of exon E9 in gamma-aminobutyric-acid receptor gamma-2 subunit via a distal downstream UCAU-rich intronic splicing enhancer. Acts to regulate a novel glycine receptor alpha-2 chain splice variant (alpha-2N) in developing spinal cord. This chain is RNA-binding protein Nova-1, found in Mus musculus (Mouse).